The sequence spans 520 residues: Cation efflux system protein CzcB (520 aa).

Residues 28–85 are disordered; it reads SGRSAPEEQGGHSESKGHGDTEHHGKQAAEADHKDDKSHGDGEHHEVKKGPNGGALFS. The segment covering 32–76 has biased composition (basic and acidic residues); sequence APEEQGGHSESKGHGDTEHHGKQAAEADHKDDKSHGDGEHHEVKK.

The protein belongs to the membrane fusion protein (MFP) (TC 8.A.1) family.

CzcA and CzcB together would act in zinc efflux nearly as effectively as the complete czc efflux system (CzcABC). The CzcB protein is thought to funnel zinc cations to the CzcA transport protein. The protein is Cation efflux system protein CzcB (czcB) of Alcaligenes sp. (strain CT14).